A 384-amino-acid polypeptide reads, in one-letter code: Prokineticin receptor 2 (384 aa).

The Extracellular segment spans residues Met1–Lys53. 3 N-linked (GlcNAc...) asparagine glycosylation sites follow: Asn7, Asn13, and Asn27. The helical transmembrane segment at Ile54–Phe74 threads the bilayer. At Ile75 to Asn89 the chain is on the cytoplasmic side. The helical transmembrane segment at Leu90–Glu110 threads the bilayer. At Met111–Val137 the chain is on the extracellular side. A disulfide bridge connects residues Cys128 and Cys208. A helical transmembrane segment spans residues Ser138–Val158. At His159–Ser171 the chain is on the cytoplasmic side. A helical membrane pass occupies residues Phe172–Thr192. The Extracellular portion of the chain corresponds to Lys193–Tyr223. A helical membrane pass occupies residues Phe224–Ala244. The Cytoplasmic portion of the chain corresponds to Arg245–Thr273. A helical membrane pass occupies residues Val274–Phe294. At Thr295–Thr313 the chain is on the extracellular side. A helical membrane pass occupies residues Ala314–Val334. The Cytoplasmic segment spans residues Thr335–Lys384.

Belongs to the G-protein coupled receptor 1 family. In terms of assembly, homodimer.

It localises to the cell membrane. In terms of biological role, receptor for prokineticin 2. Exclusively coupled to the G(q) subclass of heteromeric G proteins. Activation leads to mobilization of calcium, stimulation of phosphoinositide turnover and activation of p44/p42 mitogen-activated protein kinase. The polypeptide is Prokineticin receptor 2 (PROKR2) (Bos taurus (Bovine)).